The primary structure comprises 332 residues: Anthranilate phosphoribosyltransferase (332 aa).

5-phospho-alpha-D-ribose 1-diphosphate is bound by residues glycine 79, 82 to 83, threonine 87, 89 to 92, 107 to 115, and serine 119; these read GD, NIST, and KHGNRSVSS. Glycine 79 contributes to the anthranilate binding site. Serine 91 serves as a coordination point for Mg(2+). Asparagine 110 provides a ligand contact to anthranilate. Arginine 165 provides a ligand contact to anthranilate. Aspartate 223 and glutamate 224 together coordinate Mg(2+).

Belongs to the anthranilate phosphoribosyltransferase family. Homodimer. Requires Mg(2+) as cofactor.

It catalyses the reaction N-(5-phospho-beta-D-ribosyl)anthranilate + diphosphate = 5-phospho-alpha-D-ribose 1-diphosphate + anthranilate. It participates in amino-acid biosynthesis; L-tryptophan biosynthesis; L-tryptophan from chorismate: step 2/5. In terms of biological role, catalyzes the transfer of the phosphoribosyl group of 5-phosphorylribose-1-pyrophosphate (PRPP) to anthranilate to yield N-(5'-phosphoribosyl)-anthranilate (PRA). This is Anthranilate phosphoribosyltransferase from Vibrio vulnificus (strain YJ016).